Reading from the N-terminus, the 286-residue chain is Centromere protein P (286 aa).

Residues 1 to 73 (MDSETRELRA…RSEHSFLSKL (73 aa)) adopt a coiled-coil conformation. At Ser38 the chain carries Phosphoserine.

The protein belongs to the CENP-P/CTF19 family. In terms of assembly, component of the CENPA-CAD complex, composed of CENPI, CENPK, CENPL, CENPO, CENPP, CENPQ, CENPR and CENPS. The CENPA-CAD complex interacts with the CENPA-NAC complex, at least composed of CENPA, CENPC, CENPH, CENPM, CENPN, CENPT and CENPU.

It localises to the nucleus. It is found in the chromosome. The protein localises to the centromere. Its function is as follows. Component of the CENPA-CAD (nucleosome distal) complex, a complex recruited to centromeres which is involved in assembly of kinetochore proteins, mitotic progression and chromosome segregation. May be involved in incorporation of newly synthesized CENPA into centromeres via its interaction with the CENPA-NAC complex. This chain is Centromere protein P (Cenpp), found in Mus musculus (Mouse).